A 369-amino-acid polypeptide reads, in one-letter code: Putative esterase slr0264 (369 aa).

Catalysis depends on charge relay system residues Ser-162, Asp-303, and His-334.

The protein belongs to the AB hydrolase superfamily. AB hydrolase 4 family.

The chain is Putative esterase slr0264 from Synechocystis sp. (strain ATCC 27184 / PCC 6803 / Kazusa).